Consider the following 533-residue polypeptide: uncharacterized protein (533 aa).

4 helical membrane-spanning segments follow: residues 1–21, 135–155, 193–213, and 472–492; these read MLAFPYLMTMITPPTFDVAFI, LPRFLFGVFLSEQMIAAIAAL, AIAAGKVVVAIGSPPTKAILA, and LLVNDDFEASPGFCVIGPLVG.

It is found in the cell membrane. This is an uncharacterized protein from Mycobacterium bovis (strain ATCC BAA-935 / AF2122/97).